Here is a 111-residue protein sequence, read N- to C-terminus: UPF0235 protein glr3835 (111 aa).

Belongs to the UPF0235 family.

In Gloeobacter violaceus (strain ATCC 29082 / PCC 7421), this protein is UPF0235 protein glr3835.